The sequence spans 316 residues: Thymidylate synthase (316 aa).

DUMP is bound by residues Arg-23 and 178 to 179 (RR). The active-site Nucleophile is Cys-198. Residues 218–221 (RSGD), Asn-229, and 259–261 (HIY) contribute to the dUMP site. Position 221 (Asp-221) interacts with (6R)-5,10-methylene-5,6,7,8-tetrahydrofolate. A (6R)-5,10-methylene-5,6,7,8-tetrahydrofolate-binding site is contributed by Ala-315.

Belongs to the thymidylate synthase family. Bacterial-type ThyA subfamily. In terms of assembly, homodimer.

The protein resides in the cytoplasm. It catalyses the reaction dUMP + (6R)-5,10-methylene-5,6,7,8-tetrahydrofolate = 7,8-dihydrofolate + dTMP. The protein operates within pyrimidine metabolism; dTTP biosynthesis. Functionally, catalyzes the reductive methylation of 2'-deoxyuridine-5'-monophosphate (dUMP) to 2'-deoxythymidine-5'-monophosphate (dTMP) while utilizing 5,10-methylenetetrahydrofolate (mTHF) as the methyl donor and reductant in the reaction, yielding dihydrofolate (DHF) as a by-product. This enzymatic reaction provides an intracellular de novo source of dTMP, an essential precursor for DNA biosynthesis. This is Thymidylate synthase from Latilactobacillus sakei subsp. sakei (strain 23K) (Lactobacillus sakei subsp. sakei).